The chain runs to 435 residues: MSGYQRRPGATPLSRARSLAIPDAPAFYERRSCLPQLNCERPHGRDLDSPFFGIRPAFMCYVPSPVLASVGDTDFGYGKGKCSKQSPSGAHGTHFGDDRFEDLEEANPFSFREFLKTKNLGLSKEDPASRIYAKEASRHSLGLDHNSPPSQTGGYGLEYQQPFFEDPTGAGDLLDEEEDEDTGWSGAYLPSAIEQTHPERVPAGTSPCSTYLSFFSTPSELAGPESLPSWALSDTDSRVSPASPAGSPSADFAVHGESLGDRHLRTLQISYDALKDENSKLRRKLNEVQSFSEAQTEMVRTLERKLEAKMIKEESDYHDLESVVQQVEQNLELMTKRAVKAENHVVKLKQEISLLQAQVSNFQRENEALRCGQGASLTVVKQNADVALQNLRVVMNSAQASIKQLVSGAETLNLVAEILKSIDRISEVKDEEEDS.

Phosphoserine occurs at positions 18 and 147. Disordered stretches follow at residues 136-185 and 225-251; these read ASRH…TGWS and ESLP…PSAD. The span at 173–182 shows a compositional bias: acidic residues; that stretch reads LLDEEEDEDT. The interval 173-198 is required for interaction with PTPN13; that stretch reads LLDEEEDEDTGWSGAYLPSAIEQTHP. The segment covering 240 to 250 has biased composition (low complexity); that stretch reads SPASPAGSPSA. Phosphoserine occurs at positions 243 and 247. A coiled-coil region spans residues 261–371; it reads DRHLRTLQIS…FQRENEALRC (111 aa).

The protein belongs to the ENTR1 family. As to quaternary structure, found in a complex with ENTR1, PTPN13 and GIT1. Interacts with PTPN13 (via the FERM domain). Interacts (via N-terminus) with GIT1 (via N- and C-terminus); this interaction is direct. Interacts with NOD2. Interacts (via N-terminus) with IFT88. Interacts with VPS35. Post-translationally, phosphorylated. In terms of tissue distribution, expressed in the colon (at protein level).

Its subcellular location is the cytoplasm. The protein localises to the early endosome. It localises to the endosome. The protein resides in the recycling endosome. It is found in the midbody. Its subcellular location is the cytoskeleton. The protein localises to the microtubule organizing center. It localises to the centrosome. The protein resides in the cilium basal body. Endosome-associated protein that plays a role in membrane receptor sorting, cytokinesis and ciliogenesis. Involved in the endosome-to-plasma membrane trafficking and recycling of SNX27-retromer-dependent cargo proteins, such as GLUT1. Involved in the regulation of cytokinesis; the function may involve PTPN13 and GIT1. Plays a role in the formation of cilia. Involved in cargo protein localization, such as PKD2, at primary cilia. Involved in the presentation of the tumor necrosis factor (TNF) receptor TNFRSF1A on the cell surface, and hence in the modulation of the TNF-induced apoptosis. This Homo sapiens (Human) protein is Endosome-associated-trafficking regulator 1.